The sequence spans 757 residues: MAEVGRTGISYPGALLPQGFWAAVEVWLERPQVANKRLCGARLEARWSAALPCAEARGPGTSAGSEQKERGPGPGQGSPGGGPGPRSLSGPEQGTACCELEEAQGQCQQEEAQREAASVPLRDSGHPGHAEGREGDFPAADLDSLWEDFSQSLARGNSELLAFLTSSGAGSQPEAQRELDVVLRTVIPKTSPHCPLTTPRREIVVQDVLNGTITFLPLEEDDEGNLKVKMSNVYQIQLSHSKEEWFISVLIFCPERWHSDGIVYPKPTWLGEELLAKLAKWSVENKKSDFKSTLSLISIMKYSKAYQELKEKYKEMVKVWPEVTDPEKFVYEDVAIAAYLLILWEEERAERRLTARQSFVDLGCGNGLLVHILSSEGHPGRGIDVRRRKIWDMYGPQTQLEEDAITPNDKTLFPDVDWLIGNHSDELTPWIPVIAARSSYNCRFFVLPCCFFDFIGRYSRRQSKKTQYREYLDFIKEVGFTCGFHVDEDCLRIPSTKRVCLVGKSRTYPSSREASVDEKRTQYIKSRRGCPVSPPGWELSPSPRWVAAGSAGHCDGQQALDARVGCVTRAWAAEHGAGPQAEGPWLPGFHPREKAERVRNCAALPRDFIDQVVLQVANLLLGGKQLNTRSSRNGSLKTWNGGESLSLAEVANELDTETLRRLKRECGGLQTLLRNSHQVFQVVNGRVHIRDWREETLWKTKQPEAKQRLLSEACKTRLCWFFMHHPDGCALSTDCCPFAHGPAELRPPRTTPRKKIS.

Disordered regions lie at residues E55–Q93 and Q108–P138. Positions P72–G84 are enriched in gly residues. Phosphoserine is present on S78. Residues D123 to D136 are compositionally biased toward basic and acidic residues. S533 carries the post-translational modification Phosphoserine. The C3H1-type zinc finger occupies A713–A743.

Belongs to the TRM44 family.

It localises to the cytoplasm. The catalysed reaction is uridine(44) in tRNA(Ser) + S-adenosyl-L-methionine = 2'-O-methyluridine(44) in tRNA(Ser) + S-adenosyl-L-homocysteine + H(+). Functionally, probable adenosyl-L-methionine (AdoMet)-dependent tRNA (uracil-O(2)-)-methyltransferase. In Homo sapiens (Human), this protein is Probable tRNA (uracil-O(2)-)-methyltransferase (TRMT44).